Here is an 84-residue protein sequence, read N- to C-terminus: Large ribosomal subunit protein bL27 (84 aa).

Residues 1 to 25 (MAHKKAGGSSKNGRDSAGKRLGVKR) are disordered.

Belongs to the bacterial ribosomal protein bL27 family.

This is Large ribosomal subunit protein bL27 from Syntrophotalea carbinolica (strain DSM 2380 / NBRC 103641 / GraBd1) (Pelobacter carbinolicus).